The following is a 129-amino-acid chain: Glycine cleavage system H protein (129 aa).

Residues 24-106 enclose the Lipoyl-binding domain; sequence SYTVGITEHA…YGEGWFFRVM (83 aa). Residue K65 is modified to N6-lipoyllysine.

The protein belongs to the GcvH family. The glycine cleavage system is composed of four proteins: P, T, L and H. (R)-lipoate is required as a cofactor.

The glycine cleavage system catalyzes the degradation of glycine. The H protein shuttles the methylamine group of glycine from the P protein to the T protein. This is Glycine cleavage system H protein from Shewanella baltica (strain OS155 / ATCC BAA-1091).